The following is an 829-amino-acid chain: Leucine--tRNA ligase (829 aa).

The 'HIGH' region signature appears at 40-50 (PYPSGNIHMGH). The short motif at 581 to 585 (KMSKS) is the 'KMSKS' region element. Residue K584 coordinates ATP.

The protein belongs to the class-I aminoacyl-tRNA synthetase family.

It is found in the cytoplasm. The catalysed reaction is tRNA(Leu) + L-leucine + ATP = L-leucyl-tRNA(Leu) + AMP + diphosphate. This Oleidesulfovibrio alaskensis (strain ATCC BAA-1058 / DSM 17464 / G20) (Desulfovibrio alaskensis) protein is Leucine--tRNA ligase.